We begin with the raw amino-acid sequence, 267 residues long: MNPMLNIAIRAARKAGNVIAKNYERRDAIESTQKGINDYVTNVDKASEAEIIEVIRKSYPDHTIITEETGAIEGKDSDVQWIIDPLDGTRNFMTGLPHFSVSIAVRVKNRTEVGVVYDPIRNELFTAVRGEGAKLNEVRLRVDSKREIQGSILATGFPFKQPKLMPAQFAMMNALIEDAADFRRTGSAALDLCYVASNRIDGYFEMGLKAWDCAAGDLIVREAGGLVCDFDAGNSYLRSGNIIAAPSRVIKEMLNKIRPCLGAEFNH.

Mg(2+) contacts are provided by glutamate 67, aspartate 84, and leucine 86. Position 67 (glutamate 67) interacts with substrate. Substrate is bound by residues 86 to 89 (LDGT), arginine 183, and aspartate 212.

It belongs to the inositol monophosphatase superfamily. As to quaternary structure, homodimer. The rRNA transcription and antitermination complex (rrnTAC) consists of RNA polymerase (RNAP), NusA, NusB, NusE (rpsJ), NusG, SubB, ribosomal protein S4, DNA and precursor rRNA; S4 is more flexible than other subunits. Requires Mg(2+) as cofactor.

Its subcellular location is the cytoplasm. The enzyme catalyses a myo-inositol phosphate + H2O = myo-inositol + phosphate. Part of the processive rRNA transcription and antitermination complex (rrnTAC). The complex forms an RNA-chaperone ring around the RNA exit tunnel of RNA polymerase (RNAP). It supports rapid transcription and antitermination of rRNA operons, cotranscriptional rRNA folding, and annealing of distal rRNA regions to allow correct ribosome biogenesis. This subunit may play a central role in organizing the structure. The protein is Nus factor SuhB (suhB) of Haemophilus influenzae (strain ATCC 51907 / DSM 11121 / KW20 / Rd).